A 496-amino-acid chain; its full sequence is WD repeat-containing protein 37 (496 aa).

Polar residues-rich tracts occupy residues 1–13 (MPTE…TARQ) and 22–31 (SLSIRRTNSS). Residues 1–50 (MPTESGSCSTARQAKQKRKSHSLSIRRTNSSEQERTGLPREMLEGQDSKL) form a disordered region. Basic and acidic residues predominate over residues 32 to 47 (EQERTGLPREMLEGQD). 2 WD repeats span residues 154–194 (GHRD…CLVK) and 197–236 (GHVG…PTPQ). The disordered stretch occupies residues 238-267 (VADTSQQISGEDEIECSDKDEPDIDGDVSS). Positions 247-265 (GEDEIECSDKDEPDIDGDV) are enriched in acidic residues. WD repeat units lie at residues 281 to 320 (SHQG…LVHS), 323 to 362 (GHDQ…IHSV), 367 to 405 (GHTD…SPIA), 408 to 447 (RTDS…LARL), and 454 to 495 (GHRR…LLQE).

Forms homodimers. Interacts with PACS1. Interacts with PACS2.

Its subcellular location is the cytoplasm. The protein localises to the nucleus. Required for normal ER Ca2+ handling in lymphocytes. Together with PACS1, it plays an essential role in stabilizing peripheral lymphocyte populations. This Mus musculus (Mouse) protein is WD repeat-containing protein 37 (Wdr37).